The following is a 58-amino-acid chain: UPF0391 membrane protein Sputcn32_1322 (58 aa).

The next 2 helical transmembrane spans lie at 6–26 (LMFL…IAGA) and 28–48 (AGIA…SLLV).

Belongs to the UPF0391 family.

It is found in the cell membrane. This Shewanella putrefaciens (strain CN-32 / ATCC BAA-453) protein is UPF0391 membrane protein Sputcn32_1322.